The following is a 263-amino-acid chain: Probable ribosomal RNA small subunit methyltransferase A (263 aa).

Leu12, Gly37, Glu58, Asp83, and Asn100 together coordinate S-adenosyl-L-methionine.

This sequence belongs to the class I-like SAM-binding methyltransferase superfamily. rRNA adenine N(6)-methyltransferase family. RsmA subfamily.

The protein resides in the cytoplasm. Its function is as follows. Specifically dimethylates two adjacent adenosines in the loop of a conserved hairpin near the 3'-end of 16S rRNA in the 30S particle. May play a critical role in biogenesis of 30S subunits. This Methanococcus maripaludis (strain C7 / ATCC BAA-1331) protein is Probable ribosomal RNA small subunit methyltransferase A.